Reading from the N-terminus, the 357-residue chain is Membrane-bound lytic murein transglycosylase C (357 aa).

An N-terminal signal peptide occupies residues 1-15 (MKKYLLLALLPFLYA). Residue Cys-16 is the site of N-palmitoyl cysteine attachment. Cys-16 carries the S-diacylglycerol cysteine lipid modification.

This sequence belongs to the transglycosylase Slt family.

Its subcellular location is the cell outer membrane. The enzyme catalyses Exolytic cleavage of the (1-&gt;4)-beta-glycosidic linkage between N-acetylmuramic acid (MurNAc) and N-acetylglucosamine (GlcNAc) residues in peptidoglycan, from either the reducing or the non-reducing ends of the peptidoglycan chains, with concomitant formation of a 1,6-anhydrobond in the MurNAc residue.. In terms of biological role, murein-degrading enzyme. May play a role in recycling of muropeptides during cell elongation and/or cell division. This is Membrane-bound lytic murein transglycosylase C from Haemophilus influenzae (strain ATCC 51907 / DSM 11121 / KW20 / Rd).